The chain runs to 624 residues: MKGQETRGFQSEVKQLLHLMIHSLYSNKEIFLRELISNASDAADKLRFRALSNPDLYEGDGELRVRVSFDKDKRTLTIADNGVGMNRDEVIDHLGTIAKSGTKSFLESMGSDQAKDSQLIGQFGVGFYSAFIVADKVTVRTRAAGDKPENGVFWESAGEGEYTVADITKNDRGTEITLHLREGEDEFLDDWRVRSIISKYSDHIALPVEIEKREEKDGETVISWEKINKAQALWTRNKSEIKDDEYNEFYKHIAHDFTDPLTWSHNRVEGKQEYTSLLYIPSQAPWDLWNRDHKHGLKLYVQRVFIMDDAEQFMPNYLRFVRGLIDSNDLPLNVSREILQDSTVTRNLRSALTKRVLQMLEKLAKDDAEKYQTFWKQFGLVLKEGPAEDHANQEAIAKLLRFASTHTDSSAQTVSLEDYVSRMKEGQEKIYYITADSYAAAKNSPHLELLRKKGIEVLLLSDRIDEWMMNYLTEFDGKAFQSVAKADESIEKLADEVDENAKEAEKALEPFVERVKTLLGDRVKDVRLTHRLTDTPAIVTTDADEMSTQMAKLFAAAGQSVPEVKYIFELNPDHVLVKRTADTKDEAQFKEWVELLLDQALFAERGTLEDPNQFIRRMNQLLVS.

An a; substrate-binding region spans residues 1-336 (MKGQETRGFQ…SNDLPLNVSR (336 aa)). The interval 337-552 (EILQDSTVTR…ADEMSTQMAK (216 aa)) is b. The c stretch occupies residues 553 to 624 (LFAAAGQSVP…IRRMNQLLVS (72 aa)).

It belongs to the heat shock protein 90 family. In terms of assembly, homodimer. UMPylated on a histidine residue by YdiU under ATP-limited conditions.

The protein resides in the cytoplasm. With respect to regulation, UMPylation of the chaperone by YdiU negatively regulates its activity, facilitating Salmonella survival under ATP-limited conditions. Functionally, molecular chaperone. Has ATPase activity. The chain is Chaperone protein HtpG from Salmonella typhimurium (strain LT2 / SGSC1412 / ATCC 700720).